The primary structure comprises 1228 residues: Apical endosomal glycoprotein (1228 aa).

Residues 1–21 (MCLPSHLLSTWVLFMAAQSLG) form the signal peptide. At 23-1159 (TWLPNHCRSP…GEVAAPVSVP (1137 aa)) the chain is on the extracellular side. The region spanning 28-49 (HCRSPIKAVCNFVCDCGDCSDE) is the LDL-receptor class A 1; truncated domain. Positions 65–223 (FTCNFEQDSC…DDVEFRDCGL (159 aa)) constitute an MAM 1 domain. Residue asparagine 204 is glycosylated (N-linked (GlcNAc...) asparagine). Residues 229–267 (RCPLGHHHCQNKACVEPHQLCDGEDNCGDRSDEDPLICS) enclose the LDL-receptor class A 2 domain. 3 cysteine pairs are disulfide-bonded: cysteine 230–cysteine 242, cysteine 237–cysteine 255, and cysteine 249–cysteine 266. An MAM 2 domain is found at 270–426 (MATDFETGLG…DLIMSSHCML (157 aa)). N-linked (GlcNAc...) asparagine glycosylation is found at asparagine 290 and asparagine 340. Residues 457–492 (TCEPGHLSCGDLCVPPEQLCDFQKHCAEGEDEHKCG) form the LDL-receptor class A 3 domain. 3 cysteine pairs are disulfide-bonded: cysteine 458–cysteine 469, cysteine 465–cysteine 482, and cysteine 476–cysteine 491. MAM domains are found at residues 492–649 (GTTD…DCNP), 659–815 (LSCN…PCWA), 817–975 (KSCS…PCPQ), and 977–1144 (GSCD…QCKQ). Asparagine 641 carries N-linked (GlcNAc...) asparagine glycosylation. The N-linked (GlcNAc...) asparagine glycan is linked to asparagine 841. A helical membrane pass occupies residues 1160–1180 (VAVGGALLFFMFLVLMGLGGW). At 1181–1228 (HWLQKQHCPGQRSTDAAASGFANILFNADHVTLPESITSNPQSPPDLA) the chain is on the cytoplasmic side.

The protein resides in the membrane. In terms of biological role, probably involved in the sorting and selective transport of receptors and ligands across polarized epithelia. In Mus musculus (Mouse), this protein is Apical endosomal glycoprotein.